The following is a 388-amino-acid chain: Succinate--CoA ligase [ADP-forming] subunit beta (388 aa).

The ATP-grasp domain maps to 9–244 (KSLFAEYGLP…PSQDDAREAH (236 aa)). ATP-binding positions include lysine 46, 53 to 55 (GRG), glutamate 99, threonine 102, and glutamate 107. Residues asparagine 199 and aspartate 213 each contribute to the Mg(2+) site. Substrate is bound by residues asparagine 264 and 321 to 323 (GIV).

It belongs to the succinate/malate CoA ligase beta subunit family. In terms of assembly, heterotetramer of two alpha and two beta subunits. Mg(2+) serves as cofactor.

It catalyses the reaction succinate + ATP + CoA = succinyl-CoA + ADP + phosphate. It carries out the reaction GTP + succinate + CoA = succinyl-CoA + GDP + phosphate. It participates in carbohydrate metabolism; tricarboxylic acid cycle; succinate from succinyl-CoA (ligase route): step 1/1. In terms of biological role, succinyl-CoA synthetase functions in the citric acid cycle (TCA), coupling the hydrolysis of succinyl-CoA to the synthesis of either ATP or GTP and thus represents the only step of substrate-level phosphorylation in the TCA. The beta subunit provides nucleotide specificity of the enzyme and binds the substrate succinate, while the binding sites for coenzyme A and phosphate are found in the alpha subunit. The sequence is that of Succinate--CoA ligase [ADP-forming] subunit beta from Shewanella sp. (strain MR-4).